We begin with the raw amino-acid sequence, 142 residues long: MAKKIDAYIKLQVKSGSANPSPPVGPALGQKGVNIMEFCKAFNARTEKMEKGMPIPVVITVYSDRSFTFETKTSPASYLLKTAAGLKSGSPRPNTQKVGTIARAKVQEIAELKAADMTGADIEAMTRSIEGTARSMGLVVED.

Belongs to the universal ribosomal protein uL11 family. Part of the ribosomal stalk of the 50S ribosomal subunit. Interacts with L10 and the large rRNA to form the base of the stalk. L10 forms an elongated spine to which L12 dimers bind in a sequential fashion forming a multimeric L10(L12)X complex. In terms of processing, one or more lysine residues are methylated.

In terms of biological role, forms part of the ribosomal stalk which helps the ribosome interact with GTP-bound translation factors. The protein is Large ribosomal subunit protein uL11 of Shewanella baltica (strain OS223).